Reading from the N-terminus, the 403-residue chain is MGLRNLLDKVEHHFEKGGRYEKWYPLYEAVDTFLYRPGSVTRTTAHVRDGIDLKRMMIIVWLCTFPAMFFGMYNVGHQANLIFAQSPDLLGAQDGWRFALIGALAGFDPNSLWDCLVQGAAYFLPVYLTTFIVGGFWEVLFATIRRHEVNEGFFVTSVLFALTLPPSVPLWQVALGISFGVVLGKEVFGGTGKNFLNPALVGRAFLFFAYPAQMSGDAVWTSVDGFAGATSLSLAAAGGVDNILGHGLTWMDAFLGHMQGSMGETSTLAIFIGGAVLLLTRIASWRIVAGVMLGMIAMSYLFNAIGSTSNPMFAMPWYWHLVTGGFAFGMIFMATDPVSASMTDTGKWLFGALIGVMVMLIRVVNPAFPEGMMLAILFANLFAPLIDHFVVQANIKRRLARNG.

The next 9 helical transmembrane spans lie at 56 to 76 (MMII…YNVG), 121 to 141 (AYFL…EVLF), 164 to 184 (LPPS…VVLG), 225 to 245 (GFAG…NILG), 260 to 280 (GSMG…LLLT), 287 to 307 (IVAG…AIGS), 312 to 332 (MFAM…GMIF), 348 to 368 (WLFG…NPAF), and 371 to 391 (GMML…HFVV). Thr230 is modified (FMN phosphoryl threonine).

The protein belongs to the NqrB/RnfD family. Composed of six subunits; NqrA, NqrB, NqrC, NqrD, NqrE and NqrF. FMN serves as cofactor.

It is found in the cell inner membrane. The catalysed reaction is a ubiquinone + n Na(+)(in) + NADH + H(+) = a ubiquinol + n Na(+)(out) + NAD(+). In terms of biological role, NQR complex catalyzes the reduction of ubiquinone-1 to ubiquinol by two successive reactions, coupled with the transport of Na(+) ions from the cytoplasm to the periplasm. NqrA to NqrE are probably involved in the second step, the conversion of ubisemiquinone to ubiquinol. The sequence is that of Na(+)-translocating NADH-quinone reductase subunit B from Pseudomonas paraeruginosa (strain DSM 24068 / PA7) (Pseudomonas aeruginosa (strain PA7)).